A 678-amino-acid chain; its full sequence is Secretin ExeD (678 aa).

The first 25 residues, methionine 1 to alanine 25, serve as a signal peptide directing secretion. The segment at threonine 26 to glycine 122 is N0. The segment at glutamate 124 to glycine 188 is N1. Residues aspartate 189 to glutamine 264 form an N2 region. An N3 region spans residues glycine 267–aspartate 348. The secretin stretch occupies residues glutamine 353–aspartate 602. Positions asparagine 604–lysine 678 are s domain.

This sequence belongs to the bacterial secretin family. GSP D subfamily. In terms of assembly, forms a cylindrical channel with 15 subunits.

The protein localises to the cell outer membrane. In terms of biological role, involved in a type II secretion system (T2SS, formerly general secretion pathway, GSP) for the export of proteins. This subunit forms the outer membrane channel. The protein is Secretin ExeD (exeD) of Aeromonas hydrophila.